The primary structure comprises 512 residues: MTQFITHKWLAALGLASSIAAFPALAAKDVVVAVGSNFTTLDPYDANDTLSQAVAKSFYQGLFGLDKDMKVKNVLAEGYTVSDDGLTYTITLRRGVKFQDGADFNAAAVKANLDRASNPDNHLKRYNLYKNIAKTEVVDPATVKITLKQPFSAFINILAHPATAMISPQALEKYGKDIGFHPVGTGPYQLETWNQTDFVKVKKFAGYWQQGLPKLDSITWRPVTDNNTRAAMLQTGEAQFAFPIPYEQAALLAKNKNLELVASPSIMQRYISMNVTQKPFDNPKVREALNYAINRQALVKVAFAGYATPATGVVPPSIAYAQSYQPWPYDPAKARELLKEAGYPDGFSTTLWSSHNHSTAQKVLQFTQQQLAQIGIKARITAMDAGQRAAEVEGKGQKESGVRMFYTGWSASTGEADWALSPLFASQNWPPTQFNTAFYSNKQVDSDLAAALKTNDPQEKTRLYKEAQDIIWKESPWIPLVVEKLVSAHSKNLTGFWIMPDTGFSFDDADLK.

The first 26 residues, 1–26, serve as a signal peptide directing secretion; that stretch reads MTQFITHKWLAALGLASSIAAFPALA.

The protein belongs to the bacterial solute-binding protein 5 family. In terms of assembly, the complex is composed of two ATP-binding proteins (GsiA), two transmembrane proteins (GsiC and GsiD) and a solute-binding protein (GsiB).

Its subcellular location is the periplasm. In terms of biological role, part of the ABC transporter complex GsiABCD involved in glutathione import. Binds glutathione. This Salmonella choleraesuis (strain SC-B67) protein is Glutathione-binding protein GsiB.